A 161-amino-acid polypeptide reads, in one-letter code: ATP synthase subunit b 1 (161 aa).

A helical transmembrane segment spans residues 6 to 26 (EFYVALGFVIFVAILLYYGVH).

This sequence belongs to the ATPase B chain family. In terms of assembly, F-type ATPases have 2 components, F(1) - the catalytic core - and F(0) - the membrane proton channel. F(1) has five subunits: alpha(3), beta(3), gamma(1), delta(1), epsilon(1). F(0) has three main subunits: a(1), b(2) and c(10-14). The alpha and beta chains form an alternating ring which encloses part of the gamma chain. F(1) is attached to F(0) by a central stalk formed by the gamma and epsilon chains, while a peripheral stalk is formed by the delta and b chains.

Its subcellular location is the cell inner membrane. In terms of biological role, f(1)F(0) ATP synthase produces ATP from ADP in the presence of a proton or sodium gradient. F-type ATPases consist of two structural domains, F(1) containing the extramembraneous catalytic core and F(0) containing the membrane proton channel, linked together by a central stalk and a peripheral stalk. During catalysis, ATP synthesis in the catalytic domain of F(1) is coupled via a rotary mechanism of the central stalk subunits to proton translocation. Component of the F(0) channel, it forms part of the peripheral stalk, linking F(1) to F(0). The polypeptide is ATP synthase subunit b 1 (Beijerinckia indica subsp. indica (strain ATCC 9039 / DSM 1715 / NCIMB 8712)).